The chain runs to 157 residues: MIRIGQGYDVHKLAYDRELIVGGIKIPYEKGLLGHSDADVLLHAITDAIIGAIGAGDIGHFFPDTDMAFKDADSAELLAEIWQKVEADGFRLGNLDATIIAEKPKMAPYVEQMKLRIAELLHADSAQVNVKATTTEKLGFTGREEGIASLAVVLLEK.

A divalent metal cation contacts are provided by Asp9 and His11. 4-CDP-2-C-methyl-D-erythritol 2-phosphate-binding positions include 9-11 (DVH) and 35-36 (HS). His43 is a binding site for a divalent metal cation. 4-CDP-2-C-methyl-D-erythritol 2-phosphate is bound by residues 57–59 (DIG), 62–66 (FPDTD), 101–107 (AEKPKMA), 133–136 (TTTE), Phe140, and Arg143.

Belongs to the IspF family. As to quaternary structure, homotrimer. Requires a divalent metal cation as cofactor.

It carries out the reaction 4-CDP-2-C-methyl-D-erythritol 2-phosphate = 2-C-methyl-D-erythritol 2,4-cyclic diphosphate + CMP. It functions in the pathway isoprenoid biosynthesis; isopentenyl diphosphate biosynthesis via DXP pathway; isopentenyl diphosphate from 1-deoxy-D-xylulose 5-phosphate: step 4/6. In terms of biological role, involved in the biosynthesis of isopentenyl diphosphate (IPP) and dimethylallyl diphosphate (DMAPP), two major building blocks of isoprenoid compounds. Catalyzes the conversion of 4-diphosphocytidyl-2-C-methyl-D-erythritol 2-phosphate (CDP-ME2P) to 2-C-methyl-D-erythritol 2,4-cyclodiphosphate (ME-CPP) with a corresponding release of cytidine 5-monophosphate (CMP). This is 2-C-methyl-D-erythritol 2,4-cyclodiphosphate synthase from Listeria monocytogenes serotype 4a (strain HCC23).